Here is a 138-residue protein sequence, read N- to C-terminus: Peptide methionine sulfoxide reductase MsrB (138 aa).

A MsrB domain is found at 15 to 137; it reads EAEWRAQLDP…NSASLGFEPR (123 aa). Positions 54, 57, 103, and 106 each coordinate Zn(2+). Catalysis depends on C126, which acts as the Nucleophile.

It belongs to the MsrB Met sulfoxide reductase family. Zn(2+) is required as a cofactor.

The enzyme catalyses L-methionyl-[protein] + [thioredoxin]-disulfide + H2O = L-methionyl-(R)-S-oxide-[protein] + [thioredoxin]-dithiol. In Methylibium petroleiphilum (strain ATCC BAA-1232 / LMG 22953 / PM1), this protein is Peptide methionine sulfoxide reductase MsrB.